A 353-amino-acid polypeptide reads, in one-letter code: Elongation factor Ts (353 aa).

The tract at residues 80–83 (TDFV) is involved in Mg(2+) ion dislocation from EF-Tu.

The protein belongs to the EF-Ts family.

It is found in the cytoplasm. In terms of biological role, associates with the EF-Tu.GDP complex and induces the exchange of GDP to GTP. It remains bound to the aminoacyl-tRNA.EF-Tu.GTP complex up to the GTP hydrolysis stage on the ribosome. The protein is Elongation factor Ts of Sulfurovum sp. (strain NBC37-1).